Consider the following 572-residue polypeptide: MGNEILKAPEGPPSDVERIKKESDYLRGTLKESMLEPLSAGISDDDNRLMKHHGSYLQDDRDLRNERQKQKLEPAYQFMLRVRMPGGVATPEQWLVMDELARKYGNGTLKLTTRETFQMHGILKWNMKKTIQSIHSAMLDTIAACGDVNRNVMCTSNPYQSEIHREVYEWSKKLSDDLLPRTRAYHEIWLDEEKVAGTPDADEVEPMYGPLYLPRKFKIGIAVPPSNDIDVFSQDLGFIAIVEDDKLIGFNVAIGGGMGMTHGDKATYPQLAKVIGFCKPEQLYDVAEKTITIQRDYGNRSVRKNARFKYTVDRLGLETVKNELENRLGWSLAEAKPYHFEHNGDRYGWVKGVKGRWHFTMFVEGGRVTDYDDYKLMTGLREIAKVHTGDIRLTANQNLIIANVTSQKKKKISELIEQFGLTDGKHYTALRRSSIACVALPTCGLAMAEAERYLPKLIDKIDEIVEENGLKNEEITIRMTGCPNGCARHALGEIGFIGKAPGKYNMYLGAAFDGSRLSKMYRENIGEEEILKELRNILPRYAKERNEGERFGDFVIRAGIVKETTDGTNFHD.

4 residues coordinate [4Fe-4S] cluster: cysteine 437, cysteine 443, cysteine 482, and cysteine 486. Cysteine 486 provides a ligand contact to siroheme.

It belongs to the nitrite and sulfite reductase 4Fe-4S domain family. Alpha(8)-beta(8). The alpha component is a flavoprotein, the beta component is a hemoprotein. Siroheme serves as cofactor. [4Fe-4S] cluster is required as a cofactor.

The catalysed reaction is hydrogen sulfide + 3 NADP(+) + 3 H2O = sulfite + 3 NADPH + 4 H(+). It participates in sulfur metabolism; hydrogen sulfide biosynthesis; hydrogen sulfide from sulfite (NADPH route): step 1/1. Its function is as follows. Component of the sulfite reductase complex that catalyzes the 6-electron reduction of sulfite to sulfide. This is one of several activities required for the biosynthesis of L-cysteine from sulfate. The polypeptide is Sulfite reductase [NADPH] hemoprotein beta-component (Bacillus licheniformis (strain ATCC 14580 / DSM 13 / JCM 2505 / CCUG 7422 / NBRC 12200 / NCIMB 9375 / NCTC 10341 / NRRL NRS-1264 / Gibson 46)).